Reading from the N-terminus, the 322-residue chain is MKAERQTGLRNSFTTVIGRKLINTFVPSMMLTSVAGNDIFFRGLFKSPVLAFQSYRYVSILGQLKPSDGSTKSFKRLGRGPSSGLGKTSGRGQKGQKARGKVKSWFEGGQTPIYKLFPKIGFTNVGAKPLKELNLKRIQWFHDKNRLHLQPGEVLDMNKMRKLGLVTGPIKYGVKILASGKFHYNLPIALEASRASAKAIAAIEKAGGKFTARYYTPLGLRAHLNPQWFLEKRGRVPLQARPTKRRDIDFYSKEEKRGYLVMEKDKLLQDIKEAQNKGSRHFLKQNVKKSSLEIELEELSPEKDWVPVVSNSKVMNIKALDH.

A mitochondrion-targeting transit peptide spans 1 to 57 (MKAERQTGLRNSFTTVIGRKLINTFVPSMMLTSVAGNDIFFRGLFKSPVLAFQSYRY). A disordered region spans residues 69–99 (GSTKSFKRLGRGPSSGLGKTSGRGQKGQKAR). A compositionally biased stretch (gly residues) spans 81–93 (PSSGLGKTSGRGQ).

This sequence belongs to the universal ribosomal protein uL15 family. Component of the mitochondrial large ribosomal subunit (mt-LSU). Mature yeast 74S mitochondrial ribosomes consist of a small (37S) and a large (54S) subunit. The 37S small subunit contains a 15S ribosomal RNA (15S mt-rRNA) and 34 different proteins. The 54S large subunit contains a 21S rRNA (21S mt-rRNA) and 46 different proteins.

Its subcellular location is the mitochondrion. Its function is as follows. Component of the mitochondrial ribosome (mitoribosome), a dedicated translation machinery responsible for the synthesis of mitochondrial genome-encoded proteins, including at least some of the essential transmembrane subunits of the mitochondrial respiratory chain. The mitoribosomes are attached to the mitochondrial inner membrane and translation products are cotranslationally integrated into the membrane. This chain is Large ribosomal subunit protein uL15m (MRPL10), found in Saccharomyces cerevisiae (strain ATCC 204508 / S288c) (Baker's yeast).